The chain runs to 975 residues: E3 ubiquitin-protein ligase BRE1A (975 aa).

The interval 1–37 (MSGIGSKRAAGEPGTSVPPEKKTAVEDSGTTVETIKL) is disordered. Lysine 21 is modified (N6-acetyllysine). Serine 41 is modified (phosphoserine). Residues 43–90 (TEELDIRTLQTKNRKLAEMLDQRQAIEDELREHIEKLERRQATDDASL) adopt a coiled-coil conformation. A disordered region spans residues 125–155 (KALVVPEPEPDSDSNQERKDDRERGEGQEPA). 2 positions are modified to phosphoserine: serine 136 and serine 138. Residues 139-151 (NQERKDDRERGEG) are compositionally biased toward basic and acidic residues. Coiled coils occupy residues 168 to 375 (EEME…EEVV) and 429 to 898 (SLHK…TTKK). 2 positions are modified to N6-acetyllysine: lysine 348 and lysine 510. Positions 507–622 (DLNKTRLRSG…GKHDDGRKKE (116 aa)) are disordered. At serine 522 the chain carries Phosphoserine. Positions 527–540 (EDPKDEPAELKQDS) are enriched in basic and acidic residues. The span at 543–552 (LATQSAASKA) shows a compositional bias: polar residues. Residues 558–622 (NEIKSKRDEE…GKHDDGRKKE (65 aa)) are compositionally biased toward basic and acidic residues. At serine 562 the chain carries Phosphoserine. The segment at 922–961 (CPCCNMRKKDAVLTKCFHVFCFECVKTRYDTRQRKCPKCN) adopts an RING-type zinc-finger fold.

It belongs to the BRE1 family. As to quaternary structure, component of the RNF20/40 complex (also known as BRE1 complex) probably composed of 2 copies of RNF20/BRE1A and 2 copies of RNF40/BRE1B. Interacts with UBE2E1/UBCH6. Interacts with p53/TP53 and WAC. Interacts with PAF1; the interaction mediates the association of the PAF1 and RNF20/40 complexes which is a prerequsite for recruitment of UBE2A/B. Interacts with PA2G4. Interacts with FBXL19.

It is found in the nucleus. The enzyme catalyses S-ubiquitinyl-[E2 ubiquitin-conjugating enzyme]-L-cysteine + [acceptor protein]-L-lysine = [E2 ubiquitin-conjugating enzyme]-L-cysteine + N(6)-ubiquitinyl-[acceptor protein]-L-lysine.. It participates in protein modification; protein ubiquitination. Component of the RNF20/40 E3 ubiquitin-protein ligase complex that mediates monoubiquitination of 'Lys-120' of histone H2B (H2BK120ub1). H2BK120ub1 gives a specific tag for epigenetic transcriptional activation and is also prerequisite for histone H3 'Lys-4' and 'Lys-79' methylation (H3K4me and H3K79me, respectively). It thereby plays a central role in histone code and gene regulation. The RNF20/40 complex forms a H2B ubiquitin ligase complex in cooperation with the E2 enzyme UBE2A or UBE2B; reports about the cooperation with UBE2E1/UBCH are contradictory. Required for transcriptional activation of Hox genes. Recruited to the MDM2 promoter, probably by being recruited by p53/TP53, and thereby acts as a transcriptional coactivator. Mediates the polyubiquitination of PA2G4 leading to its proteasome-mediated degradation. The sequence is that of E3 ubiquitin-protein ligase BRE1A (RNF20) from Bos taurus (Bovine).